The primary structure comprises 134 residues: Large ribosomal subunit protein uL16c (134 aa).

This sequence belongs to the universal ribosomal protein uL16 family. In terms of assembly, part of the 50S ribosomal subunit.

It localises to the plastid. Its subcellular location is the chloroplast. This is Large ribosomal subunit protein uL16c from Guillardia theta (Cryptophyte).